A 478-amino-acid polypeptide reads, in one-letter code: Adenosylhomocysteinase (478 aa).

Substrate is bound by residues T56, D139, and E201. An NAD(+)-binding site is contributed by 202–204; sequence TTT. Positions 231 and 235 each coordinate substrate. Residues N236, 265–270, E288, N323, 344–346, and N392 contribute to the NAD(+) site; these read GYGDVG and IGH.

It belongs to the adenosylhomocysteinase family. NAD(+) serves as cofactor.

The protein localises to the cytoplasm. It catalyses the reaction S-adenosyl-L-homocysteine + H2O = L-homocysteine + adenosine. It functions in the pathway amino-acid biosynthesis; L-homocysteine biosynthesis; L-homocysteine from S-adenosyl-L-homocysteine: step 1/1. Functionally, may play a key role in the regulation of the intracellular concentration of adenosylhomocysteine. The protein is Adenosylhomocysteinase of Corynebacterium diphtheriae (strain ATCC 700971 / NCTC 13129 / Biotype gravis).